Here is a 422-residue protein sequence, read N- to C-terminus: Enolase (422 aa).

Residue Gln162 participates in (2R)-2-phosphoglycerate binding. Glu204 functions as the Proton donor in the catalytic mechanism. The Mg(2+) site is built by Asp241, Glu284, and Asp311. (2R)-2-phosphoglycerate contacts are provided by Lys336, Arg365, Ser366, and Lys387. Residue Lys336 is the Proton acceptor of the active site.

The protein belongs to the enolase family. Mg(2+) serves as cofactor.

It is found in the cytoplasm. Its subcellular location is the secreted. It localises to the cell surface. The catalysed reaction is (2R)-2-phosphoglycerate = phosphoenolpyruvate + H2O. The protein operates within carbohydrate degradation; glycolysis; pyruvate from D-glyceraldehyde 3-phosphate: step 4/5. Functionally, catalyzes the reversible conversion of 2-phosphoglycerate (2-PG) into phosphoenolpyruvate (PEP). It is essential for the degradation of carbohydrates via glycolysis. In Bartonella tribocorum (strain CIP 105476 / IBS 506), this protein is Enolase.